The sequence spans 559 residues: Pentatricopeptide repeat-containing protein At1g08610 (559 aa).

PPR repeat units follow at residues 103–137 (DEET…NQVP), 138–172 (HFPS…GGVP), 173–207 (DTIT…GSPP), 208–242 (DVIT…GCPP), 243–277 (FMIT…GCYP), 278–312 (DIVT…GLEL), 313–347 (NTVT…SYCP), 348–382 (TVIT…KCLP), 383–417 (DIVT…CCPP), 418–452 (GLIT…GIFP), 453–487 (DDIT…GNGI), 488–522 (RGST…GCKP), and 523–557 (DETI…KLLK).

Belongs to the PPR family. P subfamily.

This Arabidopsis thaliana (Mouse-ear cress) protein is Pentatricopeptide repeat-containing protein At1g08610.